A 102-amino-acid chain; its full sequence is Integration host factor subunit alpha (102 aa).

A disordered region spans residues 49–71; sequence FGNFQLRTKPQRPGRNPKTGEEI.

It belongs to the bacterial histone-like protein family. In terms of assembly, heterodimer of an alpha and a beta chain.

Functionally, this protein is one of the two subunits of integration host factor, a specific DNA-binding protein that functions in genetic recombination as well as in transcriptional and translational control. In Nitrosomonas eutropha (strain DSM 101675 / C91 / Nm57), this protein is Integration host factor subunit alpha.